The following is a 236-amino-acid chain: MRSIQQNIEHITAQIESAQQKCGRARSSVQLLAVSKTKPVEAILEATQAGQRYFGENYVQEGVDKIRYFAEHHPQLALEWHFIGPLQSNKTRLVAEHFDWVHTIDREKIALRLSEQRPVNMPPLQVLIQVNTSGEASKSGIEPQQLFTLAELISRLPNLTLRGLMSIPENVPDYPAQLAAFTQLAELQQQLAQKYPQIDTLSMGMSGDMQAAIEAGSTIVRIGTAIFGERDYSRNA.

Lysine 36 bears the N6-(pyridoxal phosphate)lysine mark.

Belongs to the pyridoxal phosphate-binding protein YggS/PROSC family.

Functionally, pyridoxal 5'-phosphate (PLP)-binding protein, which is involved in PLP homeostasis. This is Pyridoxal phosphate homeostasis protein from Vibrio cholerae serotype O1 (strain ATCC 39315 / El Tor Inaba N16961).